Here is a 249-residue protein sequence, read N- to C-terminus: ATP synthase subunit a, chloroplastic (249 aa).

Transmembrane regions (helical) follow at residues 40-60, 97-117, 136-156, 201-221, and 222-242; these read QVLI…IVAV, VPFI…GALL, INTT…AGLS, LVVV…VMFL, and GLFT…AYIG.

The protein belongs to the ATPase A chain family. F-type ATPases have 2 components, CF(1) - the catalytic core - and CF(0) - the membrane proton channel. CF(1) has five subunits: alpha(3), beta(3), gamma(1), delta(1), epsilon(1). CF(0) has four main subunits: a, b, b' and c.

It is found in the plastid. It localises to the chloroplast thylakoid membrane. Key component of the proton channel; it plays a direct role in the translocation of protons across the membrane. The protein is ATP synthase subunit a, chloroplastic of Manihot esculenta (Cassava).